A 251-amino-acid polypeptide reads, in one-letter code: HTH-type transcriptional regulator UlaR (251 aa).

In terms of domain architecture, HTH deoR-type spans 3–58; sequence EAQRHQILLEMLAQLGFVTVEKVVERLGISPATARRDINKLDESGKLKKVRNGAEA. Residues 20–39 constitute a DNA-binding region (H-T-H motif); the sequence is VTVEKVVERLGISPATARRD.

Its subcellular location is the cytoplasm. Functionally, represses ulaG and the ulaABCDEF operon. The sequence is that of HTH-type transcriptional regulator UlaR from Escherichia coli O127:H6 (strain E2348/69 / EPEC).